The following is a 314-amino-acid chain: ADP-L-glycero-D-manno-heptose-6-epimerase (314 aa).

NADP(+) is bound by residues 10-11 (MI), 31-32 (DH), Lys38, Arg53, 75-79 (EGACS), and Asn92. Residue Tyr139 is the Proton acceptor of the active site. Residue Lys143 participates in NADP(+) binding. Asn174 provides a ligand contact to substrate. NADP(+)-binding residues include Val175 and Lys183. Lys183 acts as the Proton acceptor in catalysis. Substrate-binding positions include Ser185, His192, 206–209 (FAGS), Arg214, and Tyr277.

It belongs to the NAD(P)-dependent epimerase/dehydratase family. HldD subfamily. Homopentamer. NADP(+) is required as a cofactor.

The enzyme catalyses ADP-D-glycero-beta-D-manno-heptose = ADP-L-glycero-beta-D-manno-heptose. The protein operates within nucleotide-sugar biosynthesis; ADP-L-glycero-beta-D-manno-heptose biosynthesis; ADP-L-glycero-beta-D-manno-heptose from D-glycero-beta-D-manno-heptose 7-phosphate: step 4/4. Catalyzes the interconversion between ADP-D-glycero-beta-D-manno-heptose and ADP-L-glycero-beta-D-manno-heptose via an epimerization at carbon 6 of the heptose. This chain is ADP-L-glycero-D-manno-heptose-6-epimerase, found in Vibrio cholerae serotype O1 (strain ATCC 39541 / Classical Ogawa 395 / O395).